A 391-amino-acid chain; its full sequence is Putative B3 domain-containing protein Os08g0325100 (391 aa).

Residues 32–125 constitute a DNA-binding region (TF-B3); that stretch reads GDFQHEIRGE…QFDVIIFDQV (94 aa). Residues 143-232 form a disordered region; it reads VQEGRTDATE…SSRAHPQPMP (90 aa). Positions 172-226 are enriched in polar residues; it reads EGRTNATETLNSSRAHSQPMPMQTPATETLNSSRAHSQDMPMQSPATETLNSSRA.

The protein resides in the nucleus. The polypeptide is Putative B3 domain-containing protein Os08g0325100 (Oryza sativa subsp. japonica (Rice)).